The primary structure comprises 450 residues: Probable ECA polymerase (450 aa).

The next 11 helical transmembrane spans lie at 6–26 (FSGL…LTWF), 37–57 (VFFS…TSVL), 63–83 (VGVA…CFYA), 118–138 (VILM…NGFL), 155–175 (GVAL…VYFL), 181–201 (AWLF…MIVG), 207–227 (IIIA…ISLW), 228–248 (MLAA…LKRY), 341–361 (LVVM…GLII), 378–398 (YKAA…IVLA), and 410–430 (VFFI…YWLF).

The protein belongs to the WzyE family. In terms of assembly, probably part of a complex composed of WzxE, WzyE and WzzE.

The protein localises to the cell inner membrane. The protein operates within bacterial outer membrane biogenesis; enterobacterial common antigen biosynthesis. Its function is as follows. Probably involved in the polymerization of enterobacterial common antigen (ECA) trisaccharide repeat units. The protein is Probable ECA polymerase of Escherichia coli O7:K1 (strain IAI39 / ExPEC).